We begin with the raw amino-acid sequence, 245 residues long: Endo-chitosanase (245 aa).

The signal sequence occupies residues 1–17; it reads MHFAGIVAIALATGATA.

The protein belongs to the glycosyl hydrolase 75 family.

Its subcellular location is the secreted. It carries out the reaction Endohydrolysis of beta-(1-&gt;4)-linkages between D-glucosamine residues in a partly acetylated chitosan.. In terms of biological role, chitosanase catalyzing the endo-type cleavage of chitosan, the deacylated form of chitin. Chitosanase may be crucial in the degradation of the deacetylated portion of chitin in the fungal cell wall. Chitoolisaccharides produced by the hydrolysis of partially N-acetylated chitosan are known to have many biological activities, including antibacterial activity, immune-enhancing effects, and elicitor activity. In Aspergillus oryzae (strain ATCC 42149 / RIB 40) (Yellow koji mold), this protein is Endo-chitosanase (csn).